Reading from the N-terminus, the 474-residue chain is H/ACA ribonucleoprotein complex subunit cbf5 (474 aa).

The active-site Nucleophile is the Asp-100. The PUA domain occupies 271-346; it reads YKRIVVKDSA…VVAKVKRCIM (76 aa). Disordered stretches follow at residues 361–391 and 406–474; these read SMKK…SKSY and PVVA…KKSE. The span at 368–378 shows a compositional bias: basic and acidic residues; the sequence is KKEGKLDKYGR. Low complexity predominate over residues 406 to 419; that stretch reads PVVAPAAPTVEAEV. A compositionally biased stretch (basic and acidic residues) spans 423 to 434; sequence EDSKKRKSVESS. The 7 X 3 AA approximate tandem repeats of K-K-E stretch occupies residues 434–468; it reads SEKDEDEAAKKEEKRRKKEAKKEKKEKKEKKEKKE. 7 consecutive repeat copies span residues 443–445, 450–452, 454–456, 457–459, 460–462, 463–465, and 466–468. Residues 446 to 474 are compositionally biased toward basic residues; that stretch reads EKRRKKEAKKEKKEKKEKKEKKEKKKKSE.

This sequence belongs to the pseudouridine synthase TruB family. In terms of assembly, component of the small nucleolar ribonucleoprotein particles containing H/ACA-type snoRNAs (H/ACA snoRNPs).

It localises to the nucleus. Its subcellular location is the nucleolus. It catalyses the reaction uridine in 5S rRNA = pseudouridine in 5S rRNA. The enzyme catalyses uridine in snRNA = pseudouridine in snRNA. The catalysed reaction is a uridine in mRNA = a pseudouridine in mRNA. In terms of biological role, catalytic subunit of H/ACA small nucleolar ribonucleoprotein (H/ACA snoRNP) complex, which catalyzes pseudouridylation of rRNA. This involves the isomerization of uridine such that the ribose is subsequently attached to C5, instead of the normal N1. Pseudouridine ('psi') residues may serve to stabilize the conformation of rRNAs and play a central role in ribosomal RNA processing. The H/ACA snoRNP complex also mediates pseudouridylation of other types of RNAs. Catalyzes pseudouridylation at position 93 in U2 snRNA. Also catalyzes pseudouridylation of mRNAs; H/ACA-type snoRNAs probably guide pseudouridylation of mRNAs. In Schizosaccharomyces pombe (strain 972 / ATCC 24843) (Fission yeast), this protein is H/ACA ribonucleoprotein complex subunit cbf5 (cbf5).